Consider the following 168-residue polypeptide: Photosystem I assembly protein Ycf3 (168 aa).

3 TPR repeats span residues 35–68 (AFTY…EIDP), 72–105 (SYIL…NPFL), and 120–153 (GEQA…TPGN).

Belongs to the Ycf3 family.

It localises to the plastid. The protein localises to the chloroplast thylakoid membrane. In terms of biological role, essential for the assembly of the photosystem I (PSI) complex. May act as a chaperone-like factor to guide the assembly of the PSI subunits. The polypeptide is Photosystem I assembly protein Ycf3 (Chloranthus spicatus (Chulantree)).